A 253-amino-acid polypeptide reads, in one-letter code: Beta-crystallin B1 (253 aa).

The segment covering 1-18 (MSQPAAKASATAAVNPGP) has biased composition (low complexity). The disordered stretch occupies residues 1–53 (MSQPAAKASATAAVNPGPDGKGKAGPPPGPAPGSGPAPAPAPAPAQPAPAAKA). N-acetylserine is present on Ser2. The N-terminal arm stretch occupies residues 2-59 (SQPAAKASATAAVNPGPDGKGKAGPPPGPAPGSGPAPAPAPAPAQPAPAAKAELPPGS). Residues 25–47 (GPPPGPAPGSGPAPAPAPAPAQP) show a composition bias toward pro residues. Beta/gamma crystallin 'Greek key' domains lie at 60-99 (YKLV…IVTS) and 100-144 (GPWV…RPIK). Positions 145–149 (MDAQE) are connecting peptide. 2 Beta/gamma crystallin 'Greek key' domains span residues 150–191 (HKLC…RVSS) and 192–234 (GTWV…RRLR). Positions 236–253 (RQWHREGCFPVLAAEPPK) are C-terminal arm.

This sequence belongs to the beta/gamma-crystallin family. In terms of assembly, homo/heterodimer, or complexes of higher-order. The structure of beta-crystallin oligomers seems to be stabilized through interactions between the N-terminal arms. Specific cleavages in the N-terminal arm occur during lens maturation and give rise to truncated forms, leading to impaired oligomerization and protein insolubilization.

Functionally, crystallins are the dominant structural components of the vertebrate eye lens. The polypeptide is Beta-crystallin B1 (CRYBB1) (Bos taurus (Bovine)).